The following is a 512-amino-acid chain: tRNA-2-methylthio-N(6)-dimethylallyladenosine synthase (512 aa).

The 117-residue stretch at 17–133 (RTYEVRTFGC…LPTLLERSAH (117 aa)) folds into the MTTase N-terminal domain. 6 residues coordinate [4Fe-4S] cluster: Cys26, Cys62, Cys96, Cys170, Cys174, and Cys177. The 237-residue stretch at 156 to 392 (RESAYAGWVS…LALQERISEE (237 aa)) folds into the Radical SAM core domain. The 67-residue stretch at 395 to 461 (RKLIGTTQEL…PHFLIADGGV (67 aa)) folds into the TRAM domain. Residues 473–512 (TELGETPTTAPVGVGLGMPSIKKPEPTTAGGCSTGGCGCE) are disordered.

It belongs to the methylthiotransferase family. MiaB subfamily. As to quaternary structure, monomer. It depends on [4Fe-4S] cluster as a cofactor.

It localises to the cytoplasm. It carries out the reaction N(6)-dimethylallyladenosine(37) in tRNA + (sulfur carrier)-SH + AH2 + 2 S-adenosyl-L-methionine = 2-methylsulfanyl-N(6)-dimethylallyladenosine(37) in tRNA + (sulfur carrier)-H + 5'-deoxyadenosine + L-methionine + A + S-adenosyl-L-homocysteine + 2 H(+). In terms of biological role, catalyzes the methylthiolation of N6-(dimethylallyl)adenosine (i(6)A), leading to the formation of 2-methylthio-N6-(dimethylallyl)adenosine (ms(2)i(6)A) at position 37 in tRNAs that read codons beginning with uridine. The chain is tRNA-2-methylthio-N(6)-dimethylallyladenosine synthase from Corynebacterium jeikeium (strain K411).